The chain runs to 218 residues: Elongation factor Ts (218 aa).

The interval 82–85 (TDFV) is involved in Mg(2+) ion dislocation from EF-Tu.

The protein belongs to the EF-Ts family.

The protein resides in the cytoplasm. In terms of biological role, associates with the EF-Tu.GDP complex and induces the exchange of GDP to GTP. It remains bound to the aminoacyl-tRNA.EF-Tu.GTP complex up to the GTP hydrolysis stage on the ribosome. The polypeptide is Elongation factor Ts (Picosynechococcus sp. (strain ATCC 27264 / PCC 7002 / PR-6) (Agmenellum quadruplicatum)).